A 410-amino-acid polypeptide reads, in one-letter code: Arginine deiminase (410 aa).

The Amidino-cysteine intermediate role is filled by C399.

Belongs to the arginine deiminase family.

It localises to the cytoplasm. It carries out the reaction L-arginine + H2O = L-citrulline + NH4(+). It functions in the pathway amino-acid degradation; L-arginine degradation via ADI pathway; carbamoyl phosphate from L-arginine: step 1/2. This Listeria monocytogenes serotype 4b (strain F2365) protein is Arginine deiminase.